A 246-amino-acid polypeptide reads, in one-letter code: Mast cell protease 1 (246 aa).

Positions 1-18 (MQALLFLLALLWPPEAGA) are cleaved as a signal peptide. Residues 19 to 20 (EE) constitute a propeptide, activation peptide. One can recognise a Peptidase S1 domain in the interval 21 to 244 (IIGGVESKPH…YVPWINLVIR (224 aa)). The cysteines at positions 50 and 66 are disulfide-linked. Residues H65 and D109 each act as charge relay system in the active site. 2 disulfides stabilise this stretch: C143–C208 and C174–C187. Residue S202 is the Charge relay system of the active site.

It belongs to the peptidase S1 family. Granzyme subfamily.

The polypeptide is Mast cell protease 1 (Meriones unguiculatus (Mongolian jird)).